The sequence spans 252 residues: 3-dehydroquinate dehydratase (252 aa).

Residues Ser-21, 46–48, and Arg-82 contribute to the 3-dehydroquinate site; that span reads EWR. His-143 acts as the Proton donor/acceptor in catalysis. Lys-170 (schiff-base intermediate with substrate) is an active-site residue. Arg-213, Ser-232, and Gln-236 together coordinate 3-dehydroquinate.

Belongs to the type-I 3-dehydroquinase family. In terms of assembly, homodimer.

It catalyses the reaction 3-dehydroquinate = 3-dehydroshikimate + H2O. Its pathway is metabolic intermediate biosynthesis; chorismate biosynthesis; chorismate from D-erythrose 4-phosphate and phosphoenolpyruvate: step 3/7. With respect to regulation, inhibited by (2R)-2-methyl-3-dehydroquinic acid. In terms of biological role, involved in the third step of the chorismate pathway, which leads to the biosynthesis of aromatic amino acids. Catalyzes the cis-dehydration of 3-dehydroquinate (DHQ) and introduces the first double bond of the aromatic ring to yield 3-dehydroshikimate. The reaction involves the formation of an imine intermediate between the keto group of 3-dehydroquinate and the epsilon-amino group of a Lys-170 at the active site. The sequence is that of 3-dehydroquinate dehydratase from Salmonella typhimurium (strain LT2 / SGSC1412 / ATCC 700720).